Consider the following 466-residue polypeptide: Cell division protein FtsP (466 aa).

The segment at residues 1 to 28 (MNYSRRSLFKKTLIATALSALPATLLAA) is a signal peptide (tat-type signal).

The protein belongs to the FtsP family. In terms of processing, predicted to be exported by the Tat system. The position of the signal peptide cleavage has not been experimentally proven.

It is found in the periplasm. Cell division protein that is required for growth during stress conditions. May be involved in protecting or stabilizing the divisomal assembly under conditions of stress. This Actinobacillus succinogenes (strain ATCC 55618 / DSM 22257 / CCUG 43843 / 130Z) protein is Cell division protein FtsP.